The primary structure comprises 173 residues: Alkyl hydroperoxide reductase AhpD (173 aa).

Catalysis depends on Cys131, which acts as the Proton donor. A disulfide bond links Cys131 and Cys134. Residue Cys134 is the Cysteine sulfenic acid (-SOH) intermediate of the active site.

It belongs to the AhpD family.

The catalysed reaction is N(6)-[(R)-dihydrolipoyl]-L-lysyl-[lipoyl-carrier protein] + a hydroperoxide = N(6)-[(R)-lipoyl]-L-lysyl-[lipoyl-carrier protein] + an alcohol + H2O. Its function is as follows. Antioxidant protein with alkyl hydroperoxidase activity. Required for the reduction of the AhpC active site cysteine residues and for the regeneration of the AhpC enzyme activity. The sequence is that of Alkyl hydroperoxide reductase AhpD from Rhizorhabdus wittichii (strain DSM 6014 / CCUG 31198 / JCM 15750 / NBRC 105917 / EY 4224 / RW1) (Sphingomonas wittichii).